The chain runs to 192 residues: Large ribosomal subunit protein bL9 (192 aa).

A disordered region spans residues 173-192; it reads ALRPEDFFDPEADGLDENEA. The segment covering 179-192 has biased composition (acidic residues); the sequence is FFDPEADGLDENEA.

Belongs to the bacterial ribosomal protein bL9 family.

Its function is as follows. Binds to the 23S rRNA. The sequence is that of Large ribosomal subunit protein bL9 from Rhizobium etli (strain ATCC 51251 / DSM 11541 / JCM 21823 / NBRC 15573 / CFN 42).